Here is a 727-residue protein sequence, read N- to C-terminus: E3 SUMO-protein ligase pli1 (727 aa).

Residues 18–52 (ETGLIIPQLKDILRVFGLRLSGTKAELITRIKQLI) form the SAP domain. One can recognise a PINIT domain in the interval 108–261 (YSRPFAPVVH…SVVVCFVKVY (154 aa)). Residues 290–371 (QDADIIATST…MQHILESTPS (82 aa)) form an SP-RING-type zinc finger. Zn(2+) contacts are provided by Cys321, His323, Cys344, and Cys347. 2 positions are modified to phosphoserine: Ser395 and Ser396. 2 disordered regions span residues 408-558 (ELSD…TQHS) and 706-727 (QSNNSYHNSGFEGTGNTFQSID). 2 stretches are compositionally biased toward polar residues: residues 417–435 (TMANKSNDQPTRRASTHNS) and 459–494 (VATSTTESPSNATKENSLSRNVQSPNIDTAISNRST). Over residues 546 to 558 (SQQNNNNSNTQHS) the composition is skewed to low complexity.

This sequence belongs to the PIAS family. In terms of assembly, interacts with hus5/ubc9.

It localises to the nucleus. It functions in the pathway protein modification; protein sumoylation. Its function is as follows. Acts as an E3 ligase mediating SUMO/Smt3 attachment to other proteins. Involved in the maintenance of the centromere and in telomere length. Regulates recombination, via extension sumoylation, particularly within the heterochromatin repeats. The polypeptide is E3 SUMO-protein ligase pli1 (pli1) (Schizosaccharomyces pombe (strain 972 / ATCC 24843) (Fission yeast)).